The following is a 201-amino-acid chain: Recombination protein RecR (201 aa).

Residues 57–72 form a C4-type zinc finger; that stretch reads CKSCRTFTEEDECAIC. One can recognise a Toprim domain in the interval 81–176; the sequence is GQLCVVEMPA…KVTRIAHGIP (96 aa).

Belongs to the RecR family.

In terms of biological role, may play a role in DNA repair. It seems to be involved in an RecBC-independent recombinational process of DNA repair. It may act with RecF and RecO. The protein is Recombination protein RecR of Glaesserella parasuis serovar 5 (strain SH0165) (Haemophilus parasuis).